Consider the following 97-residue polypeptide: YcgL domain-containing protein APP7_0754 (97 aa).

Residues 6-90 form the YcgL domain; that stretch reads NLCAIYKSPK…PPENLLKTFL (85 aa).

This is YcgL domain-containing protein APP7_0754 from Actinobacillus pleuropneumoniae serotype 7 (strain AP76).